The sequence spans 346 residues: Holliday junction branch migration complex subunit RuvB (346 aa).

The tract at residues 4–185 (SDRIITASPF…FGIVSRLEFY (182 aa)) is large ATPase domain (RuvB-L). ATP-binding positions include leucine 24, arginine 25, glycine 66, lysine 69, threonine 70, threonine 71, 132 to 134 (EDY), arginine 175, tyrosine 185, and arginine 222. Mg(2+) is bound at residue threonine 70. Residues 186-256 (TSDELSKIVT…VADAALQMLD (71 aa)) form a small ATPAse domain (RuvB-S) region. Residues 259 to 346 (AAGLDVLDRK…AATPGLFNPD (88 aa)) form a head domain (RuvB-H) region. DNA-binding residues include arginine 295, arginine 314, and arginine 319.

Belongs to the RuvB family. As to quaternary structure, homohexamer. Forms an RuvA(8)-RuvB(12)-Holliday junction (HJ) complex. HJ DNA is sandwiched between 2 RuvA tetramers; dsDNA enters through RuvA and exits via RuvB. An RuvB hexamer assembles on each DNA strand where it exits the tetramer. Each RuvB hexamer is contacted by two RuvA subunits (via domain III) on 2 adjacent RuvB subunits; this complex drives branch migration. In the full resolvosome a probable DNA-RuvA(4)-RuvB(12)-RuvC(2) complex forms which resolves the HJ.

It localises to the cytoplasm. It catalyses the reaction ATP + H2O = ADP + phosphate + H(+). In terms of biological role, the RuvA-RuvB-RuvC complex processes Holliday junction (HJ) DNA during genetic recombination and DNA repair, while the RuvA-RuvB complex plays an important role in the rescue of blocked DNA replication forks via replication fork reversal (RFR). RuvA specifically binds to HJ cruciform DNA, conferring on it an open structure. The RuvB hexamer acts as an ATP-dependent pump, pulling dsDNA into and through the RuvAB complex. RuvB forms 2 homohexamers on either side of HJ DNA bound by 1 or 2 RuvA tetramers; 4 subunits per hexamer contact DNA at a time. Coordinated motions by a converter formed by DNA-disengaged RuvB subunits stimulates ATP hydrolysis and nucleotide exchange. Immobilization of the converter enables RuvB to convert the ATP-contained energy into a lever motion, pulling 2 nucleotides of DNA out of the RuvA tetramer per ATP hydrolyzed, thus driving DNA branch migration. The RuvB motors rotate together with the DNA substrate, which together with the progressing nucleotide cycle form the mechanistic basis for DNA recombination by continuous HJ branch migration. Branch migration allows RuvC to scan DNA until it finds its consensus sequence, where it cleaves and resolves cruciform DNA. The polypeptide is Holliday junction branch migration complex subunit RuvB (Nitrosomonas eutropha (strain DSM 101675 / C91 / Nm57)).